The following is a 171-amino-acid chain: Sec-independent protein translocase protein TatB (171 aa).

A helical membrane pass occupies residues 1-21; the sequence is MFDIGFSELLLVFIIGLVVLG. Residues 89–171 are disordered; it reads AESMKRSYVA…APSPSSSDKP (83 aa). The span at 100-123 shows a compositional bias: basic and acidic residues; that stretch reads DPEKASDEAHTIHNPVVKDNETAH. Polar residues predominate over residues 130 to 139; sequence AAQTQASSPE.

This sequence belongs to the TatB family. As to quaternary structure, the Tat system comprises two distinct complexes: a TatABC complex, containing multiple copies of TatA, TatB and TatC subunits, and a separate TatA complex, containing only TatA subunits. Substrates initially bind to the TatABC complex, which probably triggers association of the separate TatA complex to form the active translocon.

It localises to the cell inner membrane. Functionally, part of the twin-arginine translocation (Tat) system that transports large folded proteins containing a characteristic twin-arginine motif in their signal peptide across membranes. Together with TatC, TatB is part of a receptor directly interacting with Tat signal peptides. TatB may form an oligomeric binding site that transiently accommodates folded Tat precursor proteins before their translocation. In Escherichia coli O1:K1 / APEC, this protein is Sec-independent protein translocase protein TatB.